The sequence spans 162 residues: Protein-export protein SecB (162 aa).

This sequence belongs to the SecB family. As to quaternary structure, homotetramer, a dimer of dimers. One homotetramer interacts with 1 SecA dimer.

It is found in the cytoplasm. One of the proteins required for the normal export of preproteins out of the cell cytoplasm. It is a molecular chaperone that binds to a subset of precursor proteins, maintaining them in a translocation-competent state. It also specifically binds to its receptor SecA. The sequence is that of Protein-export protein SecB from Pseudomonas savastanoi pv. phaseolicola (strain 1448A / Race 6) (Pseudomonas syringae pv. phaseolicola (strain 1448A / Race 6)).